The chain runs to 603 residues: Elongation factor 4 (603 aa).

The tr-type G domain maps to 7 to 191; sequence DNIRNFSIVA…AIVTRLPPPK (185 aa). GTP-binding positions include 19 to 24 and 138 to 141; these read DHGKST and NKVD.

This sequence belongs to the TRAFAC class translation factor GTPase superfamily. Classic translation factor GTPase family. LepA subfamily.

It localises to the cell inner membrane. It catalyses the reaction GTP + H2O = GDP + phosphate + H(+). Functionally, required for accurate and efficient protein synthesis under certain stress conditions. May act as a fidelity factor of the translation reaction, by catalyzing a one-codon backward translocation of tRNAs on improperly translocated ribosomes. Back-translocation proceeds from a post-translocation (POST) complex to a pre-translocation (PRE) complex, thus giving elongation factor G a second chance to translocate the tRNAs correctly. Binds to ribosomes in a GTP-dependent manner. This is Elongation factor 4 from Rhodopseudomonas palustris (strain ATCC BAA-98 / CGA009).